A 322-amino-acid chain; its full sequence is Acetyl-coenzyme A carboxylase carboxyl transferase subunit beta (322 aa).

The region spanning 24–293 is the CoA carboxyltransferase N-terminal domain; it reads LWIKCPDTGQ…PAVEEPAVVD (270 aa).

It belongs to the AccD/PCCB family. In terms of assembly, acetyl-CoA carboxylase is a heterohexamer composed of biotin carboxyl carrier protein (AccB), biotin carboxylase (AccC) and two subunits each of ACCase subunit alpha (AccA) and ACCase subunit beta (AccD).

It localises to the cytoplasm. It carries out the reaction N(6)-carboxybiotinyl-L-lysyl-[protein] + acetyl-CoA = N(6)-biotinyl-L-lysyl-[protein] + malonyl-CoA. It functions in the pathway lipid metabolism; malonyl-CoA biosynthesis; malonyl-CoA from acetyl-CoA: step 1/1. Functionally, component of the acetyl coenzyme A carboxylase (ACC) complex. Biotin carboxylase (BC) catalyzes the carboxylation of biotin on its carrier protein (BCCP) and then the CO(2) group is transferred by the transcarboxylase to acetyl-CoA to form malonyl-CoA. In Rhodopseudomonas palustris (strain HaA2), this protein is Acetyl-coenzyme A carboxylase carboxyl transferase subunit beta.